We begin with the raw amino-acid sequence, 344 residues long: Heat-inducible transcription repressor HrcA (344 aa).

The protein belongs to the HrcA family.

Negative regulator of class I heat shock genes (grpE-dnaK-dnaJ and groELS operons). Prevents heat-shock induction of these operons. This Streptococcus sanguinis (strain SK36) protein is Heat-inducible transcription repressor HrcA.